The following is a 224-amino-acid chain: MVQCLVVDDDPRILNYIASHLQTEHIDAYTQPSGEAALKLLEKQRVDIAVVDIMMDGMDGFQLCNTLKNDYDIPVIMLTARDALSDKERAFISGTDDYVTKPFEVKELIFRIRAVLRRYNINSNSEMTIGNLTLNQSYLELQVSNKTMTLPNKEFQLLFMLAARPKQIFTREQIIEKIWGYDYEGDERTVDVHIKRLRQRLKKLNATLTIETVRGQGYKVENHV.

Positions 3-116 (QCLVVDDDPR…ELIFRIRAVL (114 aa)) constitute a Response regulatory domain. At D52 the chain carries 4-aspartylphosphate. A DNA-binding region (ompR/PhoB-type) is located at residues 124 to 222 (NSEMTIGNLT…VRGQGYKVEN (99 aa)).

Post-translationally, phosphorylated by HssS.

It is found in the cytoplasm. Functionally, member of the two-component regulatory system HssS/HssR involved in intracellular heme homeostasis and tempering of staphylococcal virulence. Phosphorylated HssR binds to a direct repeat sequence within hrtAB promoter and activates the expression of hrtAB, an efflux pump, in response to extracellular heme, hemin, hemoglobin or blood. In Staphylococcus aureus (strain Mu50 / ATCC 700699), this protein is Heme response regulator HssR (hssR).